The following is a 126-amino-acid chain: uncharacterized protein (126 aa).

The Cytoplasmic segment spans residues 1–28; it reads MAGEAVSEHTPDSQEVTVTSVVCCLDSV. The chain crosses the membrane as a helical span at residues 29-49; sequence VEIGHHVVYSVVTPLIVAVLI. At 50–75 the chain is on the extracellular side; it reads DTMAGEAVLEHTSDSQEEIVTTVVCS. Residues 76 to 96 form a helical membrane-spanning segment; it reads VVPLVCFVVSVVCFVISVVEI. Position 97 (G97) is a topological domain, cytoplasmic. Residues 98 to 118 traverse the membrane as a helical segment; sequence HHVVYSVVAPLTVTVAVETIA. Over 119-126 the chain is Extracellular; it reads EEMDSVHT.

It is found in the membrane. This is an uncharacterized protein from Saccharomyces cerevisiae (strain ATCC 204508 / S288c) (Baker's yeast).